Reading from the N-terminus, the 81-residue chain is Photosystem I iron-sulfur center (81 aa).

4Fe-4S ferredoxin-type domains lie at 2–31 and 39–68; these read SHSV…MIPW and IASA…VRVY. Residues C11, C14, C17, C21, C48, C51, C54, and C58 each contribute to the [4Fe-4S] cluster site.

In terms of assembly, the eukaryotic PSI reaction center is composed of at least 11 subunits. The cofactor is [4Fe-4S] cluster.

The protein localises to the plastid thylakoid membrane. It catalyses the reaction reduced [plastocyanin] + hnu + oxidized [2Fe-2S]-[ferredoxin] = oxidized [plastocyanin] + reduced [2Fe-2S]-[ferredoxin]. Apoprotein for the two 4Fe-4S centers FA and FB of photosystem I (PSI); essential for photochemical activity. FB is the terminal electron acceptor of PSI, donating electrons to ferredoxin. The C-terminus interacts with PsaA/B/D and helps assemble the protein into the PSI complex. Required for binding of PsaD and PsaE to PSI. PSI is a plastocyanin-ferredoxin oxidoreductase, converting photonic excitation into a charge separation, which transfers an electron from the donor P700 chlorophyll pair to the spectroscopically characterized acceptors A0, A1, FX, FA and FB in turn. This Cuscuta obtusiflora (Peruvian dodder) protein is Photosystem I iron-sulfur center.